The chain runs to 235 residues: Orotidine 5'-phosphate decarboxylase (235 aa).

Residues Asp12, Lys34, 61-70 (DMKLLDIDNT), Thr116, Arg177, Gln186, and Arg207 each bind substrate. Lys63 functions as the Proton donor in the catalytic mechanism.

This sequence belongs to the OMP decarboxylase family. Type 1 subfamily. As to quaternary structure, homodimer.

The enzyme catalyses orotidine 5'-phosphate + H(+) = UMP + CO2. It functions in the pathway pyrimidine metabolism; UMP biosynthesis via de novo pathway; UMP from orotate: step 2/2. Its function is as follows. Catalyzes the decarboxylation of orotidine 5'-monophosphate (OMP) to uridine 5'-monophosphate (UMP). The chain is Orotidine 5'-phosphate decarboxylase from Agrobacterium fabrum (strain C58 / ATCC 33970) (Agrobacterium tumefaciens (strain C58)).